Consider the following 283-residue polypeptide: Elongation factor Ts (283 aa).

Positions 79–82 (TDFV) are involved in Mg(2+) ion dislocation from EF-Tu.

It belongs to the EF-Ts family.

It is found in the cytoplasm. Associates with the EF-Tu.GDP complex and induces the exchange of GDP to GTP. It remains bound to the aminoacyl-tRNA.EF-Tu.GTP complex up to the GTP hydrolysis stage on the ribosome. In Pseudoalteromonas translucida (strain TAC 125), this protein is Elongation factor Ts.